Reading from the N-terminus, the 130-residue chain is Large ribosomal subunit protein bL17 (130 aa).

It belongs to the bacterial ribosomal protein bL17 family. As to quaternary structure, part of the 50S ribosomal subunit. Contacts protein L32.

In Shewanella loihica (strain ATCC BAA-1088 / PV-4), this protein is Large ribosomal subunit protein bL17.